A 383-amino-acid chain; its full sequence is Peroxisomal membrane protein PEX15 (383 aa).

Residues 1-331 lie on the Cytoplasmic side of the membrane; sequence MAASEIMNNL…AVLKHHFTRS (331 aa). A helical membrane pass occupies residues 332 to 349; that stretch reads VLNKNGLLLTGLLLLLCL. Residues 350-383 are Lumenal-facing; sequence KKYKSLMAIFKHVPAAFHTVYPQIVGLLKLLASI.

As to quaternary structure, interacts with PEX6. Interacts with PEX19; targets PEX15 to the peroxisome. Post-translationally, phosphorylated.

The protein localises to the peroxisome membrane. Its subcellular location is the endoplasmic reticulum membrane. In terms of biological role, peroxisomal docking factor that anchors PEX1 and PEX6 to peroxisome membranes. PEX26 is therefore required for the formation of the PEX1-PEX6 AAA ATPase complex, a complex that mediates the extraction of the PEX5 receptor from peroxisomal membrane. This chain is Peroxisomal membrane protein PEX15 (PEX15), found in Saccharomyces cerevisiae (strain ATCC 204508 / S288c) (Baker's yeast).